Reading from the N-terminus, the 122-residue chain is Large ribosomal subunit protein uL14 (122 aa).

This sequence belongs to the universal ribosomal protein uL14 family. As to quaternary structure, part of the 50S ribosomal subunit. Forms a cluster with proteins L3 and L19. In the 70S ribosome, L14 and L19 interact and together make contacts with the 16S rRNA in bridges B5 and B8.

In terms of biological role, binds to 23S rRNA. Forms part of two intersubunit bridges in the 70S ribosome. The protein is Large ribosomal subunit protein uL14 of Ruthia magnifica subsp. Calyptogena magnifica.